The primary structure comprises 481 residues: uncharacterized protein (481 aa).

Belongs to the metallophosphoesterase superfamily.

This is an uncharacterized protein from Bacillus subtilis (strain 168).